We begin with the raw amino-acid sequence, 552 residues long: Chaperonin GroEL 1 (552 aa).

ATP is bound by residues 30–33, Lys51, 87–91, Gly415, 479–481, and Asp495; these read TLGP, DGTTT, and NAA.

This sequence belongs to the chaperonin (HSP60) family. In terms of assembly, forms a cylinder of 14 subunits composed of two heptameric rings stacked back-to-back. Interacts with the co-chaperonin GroES.

It is found in the cytoplasm. The catalysed reaction is ATP + H2O + a folded polypeptide = ADP + phosphate + an unfolded polypeptide.. Together with its co-chaperonin GroES, plays an essential role in assisting protein folding. The GroEL-GroES system forms a nano-cage that allows encapsulation of the non-native substrate proteins and provides a physical environment optimized to promote and accelerate protein folding. The chain is Chaperonin GroEL 1 from Albidiferax ferrireducens (strain ATCC BAA-621 / DSM 15236 / T118) (Rhodoferax ferrireducens).